Consider the following 518-residue polypeptide: GMP synthase [glutamine-hydrolyzing] (518 aa).

Residues 6–200 (RLLIIDFGSQ…FVKLAGFKGD (195 aa)) form the Glutamine amidotransferase type-1 domain. C84 serves as the catalytic Nucleophile. Catalysis depends on residues H175 and E177. The GMPS ATP-PPase domain maps to 201 to 393 (WTMGAYREEA…LGLPDSFIGR (193 aa)). ATP is bound at residue 228 to 234 (SGGVDSS).

In terms of assembly, homodimer.

It carries out the reaction XMP + L-glutamine + ATP + H2O = GMP + L-glutamate + AMP + diphosphate + 2 H(+). The protein operates within purine metabolism; GMP biosynthesis; GMP from XMP (L-Gln route): step 1/1. In terms of biological role, catalyzes the synthesis of GMP from XMP. This is GMP synthase [glutamine-hydrolyzing] from Cereibacter sphaeroides (strain ATCC 17025 / ATH 2.4.3) (Rhodobacter sphaeroides).